A 413-amino-acid chain; its full sequence is Porin PorA (413 aa).

Residues 1–22 form the signal peptide; sequence MKKVVSSLLIILGAAMLIFAIA. Positions 265–288 are disordered; the sequence is TKSAADSKDDKKKDGDKKDEKSPE.

It belongs to the PorA family.

The protein resides in the secreted. Its subcellular location is the cell wall. Functionally, forms water-filled channels that favor the permeation of cations. The polypeptide is Porin PorA (Corynebacterium resistens (strain DSM 45100 / JCM 12819 / GTC 2026 / SICGH 158)).